Reading from the N-terminus, the 229-residue chain is Protein AF_2251 (229 aa).

This sequence belongs to the CinA family.

The protein is Protein AF_2251 of Archaeoglobus fulgidus (strain ATCC 49558 / DSM 4304 / JCM 9628 / NBRC 100126 / VC-16).